A 382-amino-acid chain; its full sequence is Type 2 DNA topoisomerase 6 subunit A (382 aa).

In terms of domain architecture, Topo IIA-type catalytic spans 14 to 155; the sequence is YDPQKVLKKL…MHITADRRGY (142 aa). Tyr108 acts as the O-(5'-phospho-DNA)-tyrosine intermediate in catalysis. Residues Glu202 and Asp254 each coordinate Mg(2+).

It belongs to the TOP6A family. In terms of assembly, homodimer. Heterotetramer of two Top6A and two Top6B chains. Requires Mg(2+) as cofactor.

It catalyses the reaction ATP-dependent breakage, passage and rejoining of double-stranded DNA.. Relaxes both positive and negative superturns and exhibits a strong decatenase activity. This is Type 2 DNA topoisomerase 6 subunit A from Pyrococcus horikoshii (strain ATCC 700860 / DSM 12428 / JCM 9974 / NBRC 100139 / OT-3).